Consider the following 237-residue polypeptide: Ig heavy chain Mem5 (237 aa).

Ig-like domains are found at residues 1-119 (EVKL…LTVS) and 126-218 (PSVY…KKIE). Cysteines 22 and 98 form a disulfide. Residues 101–105 (VDYGT) are d segment. The tract at residues 106–120 (NYDYWGQGTTLTVSS) is JH2 segment. C147 and C202 are joined by a disulfide.

It is found in the secreted. Functionally, anti-influenza H3N2 neuraminidase antibody. In Mus musculus (Mouse), this protein is Ig heavy chain Mem5.